A 163-amino-acid polypeptide reads, in one-letter code: Type-2 ice-structuring protein (163 aa).

The first 17 residues, 1-17, serve as a signal peptide directing secretion; the sequence is MLTVSLLVCAMMALTQA. Positions 18-34 are excised as a propeptide; it reads NDDKILKGTATEAGPVS. The C-type lectin domain occupies 39–163; that stretch reads PNCPAGWQPL…SHKSVCAMTF (125 aa). Disulfide bonds link cysteine 41–cysteine 52, cysteine 69–cysteine 159, cysteine 103–cysteine 134, cysteine 123–cysteine 145, and cysteine 135–cysteine 151.

The N-terminus is blocked.

Its subcellular location is the secreted. Its function is as follows. Antifreeze proteins lower the blood freezing point. In Hemitripterus americanus (Sea raven), this protein is Type-2 ice-structuring protein.